The sequence spans 33 residues: Dermaseptin-4 (33 aa).

Leu33 is subject to Leucine amide.

Expressed by the skin glands.

Its subcellular location is the secreted. Its function is as follows. Has antiparasitic activity against trypomastigote form of T.cruzi (IC(50)=0.25 uM) in vitro but not against L.infantum. Probably acts by permeabilizing cell membranes. In vitro, shows no cytotoxicity against macrophages. Has antibacterial activity. This chain is Dermaseptin-4, found in Pithecopus nordestinus (Northeastern Brazilian leaf frog).